The sequence spans 423 residues: Exodeoxyribonuclease 7 large subunit (423 aa).

It belongs to the XseA family. In terms of assembly, heterooligomer composed of large and small subunits.

The protein localises to the cytoplasm. It carries out the reaction Exonucleolytic cleavage in either 5'- to 3'- or 3'- to 5'-direction to yield nucleoside 5'-phosphates.. Bidirectionally degrades single-stranded DNA into large acid-insoluble oligonucleotides, which are then degraded further into small acid-soluble oligonucleotides. The polypeptide is Exodeoxyribonuclease 7 large subunit (Natranaerobius thermophilus (strain ATCC BAA-1301 / DSM 18059 / JW/NM-WN-LF)).